We begin with the raw amino-acid sequence, 249 residues long: Metallo-beta-lactamase type 2 (249 aa).

Positions 1 to 22 are cleaved as a signal peptide; that stretch reads MLKRLKGLLVLALGFTGLQVFG. H98, H100, D102, H161, and C180 together coordinate Zn(2+). K183 is a binding site for substrate. Residue H222 coordinates Zn(2+).

Belongs to the metallo-beta-lactamase superfamily. Class-B beta-lactamase family. As to quaternary structure, monomer. The cofactor is Zn(2+).

The protein localises to the periplasm. The catalysed reaction is a beta-lactam + H2O = a substituted beta-amino acid. In terms of biological role, confers resistance to the different beta-lactams antibiotics (penicillin, cephalosporin and carbapenem) via the hydrolysis of the beta-lactam ring. This Elizabethkingia meningoseptica (Chryseobacterium meningosepticum) protein is Metallo-beta-lactamase type 2 (blaB5).